A 277-amino-acid chain; its full sequence is Large ribosomal subunit protein uL2c (277 aa).

2 disordered regions span residues 36–56 and 225–259; these read NKHS…HRGG and MNSV…GSKS.

The protein belongs to the universal ribosomal protein uL2 family. In terms of assembly, part of the 50S ribosomal subunit.

Its subcellular location is the plastid. The protein localises to the chloroplast. The chain is Large ribosomal subunit protein uL2c (rpl2) from Psilotum nudum (Whisk fern).